A 426-amino-acid polypeptide reads, in one-letter code: MDDSFDIYEIKARQVLDSRGNPTVEAEVLTAGGGYGHTIVPSGASTGTFEAVELRDATEKYGGKSVLNAVSNVNDIIAQELIGEDARNQRLIDQIMINLDGTENKGNLGANAILAVSLAVAKAAADTASLPLYKYIGGCNAYVMPAPMMNVLNGGQHAGNALDFQEFMIMPVGADSFAEAVRMCAETYQSLKKVVAEKYGKDAVNIGDEGGFAPPVKTIDEALALLLEGVKRAGYEDEIVFTLDSAASEFYDEKSGSYIVAGEKVSTDKLIDIYKEMVAQYPIVSIEDPLFEEDFEGFTKATKELKGIQIVGDDLFVTNTKRLKKGIEMGASNSLLLKVNQIGTLSESIDAANMAFRNGYSLVVSHRSGESEDSTIADLAVALNSGQIKTGAPARGERTAKYNQLIRIEEELQISKYAGKDFKVPF.

(2R)-2-phosphoglycerate is bound at residue glutamine 165. Residue glutamate 209 is the Proton donor of the active site. Mg(2+)-binding residues include aspartate 244, glutamate 287, and aspartate 313. (2R)-2-phosphoglycerate-binding residues include lysine 338, arginine 367, serine 368, and lysine 389. The active-site Proton acceptor is lysine 338.

The protein belongs to the enolase family. It depends on Mg(2+) as a cofactor.

The protein localises to the cytoplasm. It is found in the secreted. The protein resides in the cell surface. It carries out the reaction (2R)-2-phosphoglycerate = phosphoenolpyruvate + H2O. It participates in carbohydrate degradation; glycolysis; pyruvate from D-glyceraldehyde 3-phosphate: step 4/5. Functionally, catalyzes the reversible conversion of 2-phosphoglycerate (2-PG) into phosphoenolpyruvate (PEP). It is essential for the degradation of carbohydrates via glycolysis. In Methanococcus maripaludis (strain C5 / ATCC BAA-1333), this protein is Enolase.